A 478-amino-acid polypeptide reads, in one-letter code: Putative response regulator NtrX-like (478 aa).

The region spanning 5–121 (DVLIVDDEED…KLVILLKRAC (117 aa)) is the Response regulatory domain. D54 carries the 4-aspartylphosphate modification. The 230-residue stretch at 143–372 (LVGNSTITLK…LRNVVEWTLI (230 aa)) folds into the Sigma-54 factor interaction domain. Residues 171–178 (GKVGSGKE) and 235–244 (ANNGTLYIDE) each bind ATP.

In terms of biological role, member of the two-component regulatory system RBE_0312/RBE_0470. The chain is Putative response regulator NtrX-like from Rickettsia bellii (strain RML369-C).